The following is a 485-amino-acid chain: Glutamyl-tRNA(Gln) amidotransferase subunit A (485 aa).

Catalysis depends on charge relay system residues Lys-74 and Ser-149. Ser-173 functions as the Acyl-ester intermediate in the catalytic mechanism.

The protein belongs to the amidase family. GatA subfamily. As to quaternary structure, heterotrimer of A, B and C subunits.

The enzyme catalyses L-glutamyl-tRNA(Gln) + L-glutamine + ATP + H2O = L-glutaminyl-tRNA(Gln) + L-glutamate + ADP + phosphate + H(+). Functionally, allows the formation of correctly charged Gln-tRNA(Gln) through the transamidation of misacylated Glu-tRNA(Gln) in organisms which lack glutaminyl-tRNA synthetase. The reaction takes place in the presence of glutamine and ATP through an activated gamma-phospho-Glu-tRNA(Gln). The protein is Glutamyl-tRNA(Gln) amidotransferase subunit A of Janthinobacterium sp. (strain Marseille) (Minibacterium massiliensis).